Here is a 1321-residue protein sequence, read N- to C-terminus: Indole-3-acetaldehyde oxidase (1321 aa).

Residues 1–90 (MSLVFAINGQ…HCNITTSEGL (90 aa)) enclose the 2Fe-2S ferredoxin-type domain. [2Fe-2S] cluster-binding residues include cysteine 42, cysteine 47, and cysteine 50. The FAD-binding PCMH-type domain occupies 215-404 (VDSGMYRWCS…LSIEIPFWHS (190 aa)).

The protein belongs to the xanthine dehydrogenase family. In terms of assembly, aldehyde oxidases (AO) are homodimers and heterodimers of AO subunits. AO-beta is a AAO1-AAO2 heterodimer; AO-gamma is a AAO2 homodimer. AAO2 also forms a dimer with AAO3. [2Fe-2S] cluster serves as cofactor. It depends on FAD as a cofactor. The cofactor is Mo-molybdopterin. Weakly expressed in roots, leaves and seedlings. In seedlings, mostly expressed in lower part of hypocotyls. Detectable in seeds and mature siliques at low levels.

It localises to the cytoplasm. It carries out the reaction indole-3-acetaldehyde + O2 + H2O = (indol-3-yl)acetate + H2O2 + H(+). Its activity is regulated as follows. Strongly inhibited by iodoacetate, potassium cyanide (KCN), 2-mercaptoethanol, dithiothreitol (DTT), p-chloromercuribenzoate, menadione and estradiol. Weakly inhibited by 4'-(9-acridinylamino)methanesulfon-m-anisidine (mAMSA) and tritonX-100. Not affected by allopurinol. In higher plant aldehyde oxidases (AO) appear to be homo- and heterodimeric assemblies of AO subunits with probably different physiological functions. In vitro, AO-gamma uses heptaldehyde, benzaldehyde, naphthaldehyde and cinnamaldehyde as substrates; AO-beta uses indole-3-acetaldehyde (IAAld), indole-3-aldehyde (IAld) and naphtaldehyde; the AAO2-AAO3 dimer uses abscisic aldehyde. This Arabidopsis thaliana (Mouse-ear cress) protein is Indole-3-acetaldehyde oxidase (AAO2).